The sequence spans 167 residues: uncharacterized protein (167 aa).

A coiled-coil region spans residues 70-118 (KIVELRKAMESIITELAYIKGELKGLQEKGESKVERKEIIEEKIQKAMV). Residues 128–155 (EKEERKPAKESKRREHDVIIPEGKKEER) show a composition bias toward basic and acidic residues. Positions 128–167 (EKEERKPAKESKRREHDVIIPEGKKEERTDDGEDGLIVCD) are disordered.

This is an uncharacterized protein from Archaeoglobus fulgidus (strain ATCC 49558 / DSM 4304 / JCM 9628 / NBRC 100126 / VC-16).